The following is a 743-amino-acid chain: ABC-type transporter claG (743 aa).

N4 and N30 each carry an N-linked (GlcNAc...) asparagine glycan. Residues 124 to 144 (SILLDIFLVIVVSWPFPFAWI) form a helical membrane-spanning segment. N159 carries N-linked (GlcNAc...) asparagine glycosylation. An ABC transporter domain is found at 200–439 (VEFSGISMRP…FQDAGYTFPL (240 aa)). 234-241 (GPSGSGKS) serves as a coordination point for ATP. The next 5 membrane-spanning stretches (helical) occupy residues 507–527 (YPSF…IGLS), 560–580 (GMLL…KTFG), 611–631 (IFLS…PIVS), 636–656 (LIVN…ISAI), and 661–681 (NGPL…GCAP).

This sequence belongs to the ABC transporter superfamily. ABCG family.

It is found in the membrane. Functionally, ABC-type transporter; part of the cla gene cluster that produces clavatol and ortho-quinone methide. The clavatol biosynthesis cluster cla and the terrestric acid cluster tra are both involved in the production of peniphenones and penilactones. The protein is ABC-type transporter claG of Penicillium crustosum (Blue mold fungus).